The chain runs to 436 residues: Two-pore potassium channel 3 (436 aa).

Topologically, residues 1-148 are cytoplasmic; sequence MANEGSDPLL…QKDPTETSRS (148 aa). A disordered region spans residues 62–117; that stretch reads SHFIDSMKQPSPSSSSTAVNNPFSDSSTLDPLLPPPPPQPEPWLSDQTSSHCQGHA. Low complexity predominate over residues 71 to 92; that stretch reads PSPSSSSTAVNNPFSDSSTLDP. A compositionally biased stretch (pro residues) spans 93-102; it reads LLPPPPPQPE. A helical transmembrane segment spans residues 149–169; it reads VVRQAFALLVVYLSLGVLIYW. An intramembrane region (pore-forming) is located at residues 185–204; sequence DGLYFCIVTMCTIGYGDITP. Residues 212–232 traverse the membrane as a helical segment; sequence FSIMFVLVGFGFIDILLSGMV. The Cytoplasmic portion of the chain corresponds to 233–274; that stretch reads SYVLDLQESYMLDSAKRRDEPEKRRSYIIDVKKGRMRIRLKV. Residues 275–295 form a helical membrane-spanning segment; it reads ALALGVVVLCIAVGVGIMHFI. The pore-forming intramembrane region spans 302–321; sequence DSFYLSVMSVTTVGYGDRAF. The chain crosses the membrane as a helical span at residues 328-348; the sequence is LFAAIWLLVSTLAVARAFLYL. Topologically, residues 349–436 are cytoplasmic; sequence AEARVDKRNR…LDLLEGGSGD (88 aa). EF-hand domains are found at residues 365–400 and 404–436; these read LCET…EMEK and KDIL…GSGD. Ca(2+) is bound by residues aspartate 378, aspartate 380, asparagine 382, cysteine 384, glutamate 389, aspartate 417, asparagine 421, lysine 423, and aspartate 428.

The protein belongs to the two pore domain potassium channel (TC 1.A.1.7) family. In terms of assembly, homodimer. In terms of tissue distribution, expressed in roots, cotyledons, stems, hypocotyls, leaves and flowers. Detected in root tips and in mesophyll cells and guard cells of the leaves.

Its subcellular location is the vacuole membrane. It localises to the plastid. The protein localises to the chloroplast thylakoid membrane. Its activity is regulated as follows. Inhibited by barium, but not by tetraethylammonium. In terms of biological role, two-pore potassium channel modulating the proton motive force (pmf) necessary to convert photochemical energy into physiological functions. Mediates the potassium efflux from the thylakoid lumen required for the regulation of the transmembrane electrical potential, the enhancement of the pH gradient for ATP synthesis, the regulation of electron flow, and pH-mediated photoprotective responses. Requires calcium for channel activity. In Arabidopsis thaliana (Mouse-ear cress), this protein is Two-pore potassium channel 3.